The primary structure comprises 342 residues: Methionyl-tRNA formyltransferase (342 aa).

Position 119 to 122 (119 to 122) interacts with (6S)-5,6,7,8-tetrahydrofolate; sequence SILP.

This sequence belongs to the Fmt family.

The catalysed reaction is L-methionyl-tRNA(fMet) + (6R)-10-formyltetrahydrofolate = N-formyl-L-methionyl-tRNA(fMet) + (6S)-5,6,7,8-tetrahydrofolate + H(+). Functionally, attaches a formyl group to the free amino group of methionyl-tRNA(fMet). The formyl group appears to play a dual role in the initiator identity of N-formylmethionyl-tRNA by promoting its recognition by IF2 and preventing the misappropriation of this tRNA by the elongation apparatus. In Nostoc sp. (strain PCC 7120 / SAG 25.82 / UTEX 2576), this protein is Methionyl-tRNA formyltransferase.